Here is a 650-residue protein sequence, read N- to C-terminus: Acetyl-coenzyme A synthetase (650 aa).

Residues Arg-191–Arg-194, Thr-311, and Asn-335 contribute to the CoA site. ATP-binding positions include Gly-387–Pro-389, Asp-411–Thr-416, Asp-500, and Arg-515. Ser-523 is a CoA binding site. Residue Arg-526 coordinates ATP. Mg(2+)-binding residues include Val-537, His-539, and Val-542. Residue Arg-584 participates in CoA binding. Position 609 is an N6-acetyllysine (Lys-609).

This sequence belongs to the ATP-dependent AMP-binding enzyme family. Requires Mg(2+) as cofactor. Acetylated. Deacetylation by the SIR2-homolog deacetylase activates the enzyme.

The enzyme catalyses acetate + ATP + CoA = acetyl-CoA + AMP + diphosphate. Its function is as follows. Catalyzes the conversion of acetate into acetyl-CoA (AcCoA), an essential intermediate at the junction of anabolic and catabolic pathways. AcsA undergoes a two-step reaction. In the first half reaction, AcsA combines acetate with ATP to form acetyl-adenylate (AcAMP) intermediate. In the second half reaction, it can then transfer the acetyl group from AcAMP to the sulfhydryl group of CoA, forming the product AcCoA. This chain is Acetyl-coenzyme A synthetase, found in Shewanella oneidensis (strain ATCC 700550 / JCM 31522 / CIP 106686 / LMG 19005 / NCIMB 14063 / MR-1).